Reading from the N-terminus, the 156-residue chain is 1-methylthio-D-xylulose 5-phosphate methylsulfurylase (156 aa).

In terms of domain architecture, Cupin type-2 spans 55–122 (YFEVGPGGHS…ADEALGFLCM (68 aa)). Residues glutamate 67, histidine 69, histidine 73, and histidine 107 each contribute to the Mn(2+) site. Cysteine 121 is an active-site residue.

The enzyme catalyses S-methyl-1-thio-D-xylulose 5-phosphate + glutathione = S-(methylsulfanyl)glutathione + 1-deoxy-D-xylulose 5-phosphate. It carries out the reaction S-(methylsulfanyl)glutathione + AH2 = methanethiol + glutathione + A. Its pathway is amino-acid biosynthesis; L-methionine biosynthesis via salvage pathway. It functions in the pathway metabolic intermediate biosynthesis; 1-deoxy-D-xylulose 5-phosphate biosynthesis. Catalyzes the formation of S-(methylsulfanyl)glutathione and 1-deoxy-D-xylulose 5-phosphate (DXP) from 1-methylthioxylulose 5-phosphate (MTXu-5P). The S-(methylsulfanyl)glutathione is reductively cleaved to relase methanethiol in a second reaction. Involved in the MTA-isoprenoid shunt of the methionine salvage pathway. This is 1-methylthio-D-xylulose 5-phosphate methylsulfurylase from Rhodospirillum rubrum (strain ATCC 11170 / ATH 1.1.1 / DSM 467 / LMG 4362 / NCIMB 8255 / S1).